We begin with the raw amino-acid sequence, 59 residues long: UPF0434 protein VC_1876 (59 aa).

It belongs to the UPF0434 family.

The sequence is that of UPF0434 protein VC_1876 from Vibrio cholerae serotype O1 (strain ATCC 39315 / El Tor Inaba N16961).